Here is a 424-residue protein sequence, read N- to C-terminus: Anaerobic glycerol-3-phosphate dehydrogenase subunit B (424 aa).

This sequence belongs to the anaerobic G-3-P dehydrogenase subunit B family. Composed of a catalytic GlpA/B dimer and of membrane bound GlpC. FMN serves as cofactor.

It catalyses the reaction a quinone + sn-glycerol 3-phosphate = dihydroxyacetone phosphate + a quinol. Its pathway is polyol metabolism; glycerol degradation via glycerol kinase pathway; glycerone phosphate from sn-glycerol 3-phosphate (anaerobic route): step 1/1. Conversion of glycerol 3-phosphate to dihydroxyacetone. Uses fumarate or nitrate as electron acceptor. The protein is Anaerobic glycerol-3-phosphate dehydrogenase subunit B of Yersinia pestis bv. Antiqua (strain Antiqua).